Consider the following 105-residue polypeptide: Large ribosomal subunit protein bL21 (105 aa).

Belongs to the bacterial ribosomal protein bL21 family. Part of the 50S ribosomal subunit. Contacts protein L20.

Functionally, this protein binds to 23S rRNA in the presence of protein L20. The sequence is that of Large ribosomal subunit protein bL21 from Treponema pallidum (strain Nichols).